Consider the following 403-residue polypeptide: Argininosuccinate synthase (403 aa).

10–18 (AYSGGVDTS) contributes to the ATP binding site. Tyr89 lines the L-citrulline pocket. Gly119 is an ATP binding site. L-aspartate contacts are provided by Thr121, Asn125, and Asp126. Asn125 is an L-citrulline binding site. L-citrulline contacts are provided by Arg129, Ser177, Ser186, Glu262, and Tyr274.

The protein belongs to the argininosuccinate synthase family. Type 1 subfamily. As to quaternary structure, homotetramer.

The protein localises to the cytoplasm. It carries out the reaction L-citrulline + L-aspartate + ATP = 2-(N(omega)-L-arginino)succinate + AMP + diphosphate + H(+). Its pathway is amino-acid biosynthesis; L-arginine biosynthesis; L-arginine from L-ornithine and carbamoyl phosphate: step 2/3. The sequence is that of Argininosuccinate synthase from Synechococcus sp. (strain JA-3-3Ab) (Cyanobacteria bacterium Yellowstone A-Prime).